The primary structure comprises 337 residues: Inositol 2-dehydrogenase (337 aa).

It belongs to the Gfo/Idh/MocA family. In terms of assembly, homotetramer.

It carries out the reaction myo-inositol + NAD(+) = scyllo-inosose + NADH + H(+). Involved in the oxidation of myo-inositol (MI) to 2-keto-myo-inositol (2KMI or 2-inosose). In Corynebacterium glutamicum (strain R), this protein is Inositol 2-dehydrogenase.